A 254-amino-acid chain; its full sequence is Thiazole synthase (254 aa).

Lys-95 acts as the Schiff-base intermediate with DXP in catalysis. 1-deoxy-D-xylulose 5-phosphate is bound by residues Gly-156, 182–183 (AG), and 204–205 (NT).

It belongs to the ThiG family. In terms of assembly, homotetramer. Forms heterodimers with either ThiH or ThiS.

It is found in the cytoplasm. It catalyses the reaction [ThiS sulfur-carrier protein]-C-terminal-Gly-aminoethanethioate + 2-iminoacetate + 1-deoxy-D-xylulose 5-phosphate = [ThiS sulfur-carrier protein]-C-terminal Gly-Gly + 2-[(2R,5Z)-2-carboxy-4-methylthiazol-5(2H)-ylidene]ethyl phosphate + 2 H2O + H(+). It functions in the pathway cofactor biosynthesis; thiamine diphosphate biosynthesis. Catalyzes the rearrangement of 1-deoxy-D-xylulose 5-phosphate (DXP) to produce the thiazole phosphate moiety of thiamine. Sulfur is provided by the thiocarboxylate moiety of the carrier protein ThiS. In vitro, sulfur can be provided by H(2)S. This Shewanella putrefaciens (strain CN-32 / ATCC BAA-453) protein is Thiazole synthase.